A 177-amino-acid chain; its full sequence is MGLLSLIRGLKKKEGEARILVLGLDNAGKTTILKALSEEDITTITPTQGFNIKSLSRDGFNLKIWDIGGQKSIRPYWRNYFDQTDALIYVIDSADSKRLSESEFELTELLQEEKMTGVPLLVFANKQDLVGALAADEIASTLDLTSIRDRPWQIQACSAKQGTGLKEGMEWMMKQVK.

The N-myristoyl glycine moiety is linked to residue glycine 2. GTP contacts are provided by residues 23 to 31 (GLDNAGKTT), 125 to 128 (NKQD), and alanine 159.

It belongs to the small GTPase superfamily. Arf family.

The protein localises to the golgi apparatus membrane. It localises to the cytoplasm. Its subcellular location is the cytoskeleton. It is found in the spindle. The protein resides in the nucleus. The protein localises to the microtubule organizing center. In terms of biological role, small GTP-binding protein which cycles between an inactive GDP-bound and an active GTP-bound form, and the rate of cycling is regulated by guanine nucleotide exchange factors (GEF) and GTPase-activating proteins (GAP). Required for normal cytokinesis and cilia signaling. Required for targeting proteins to the ciliary membrane by releasing myristoylated protein from unc119 cargo adapters into the cilium. This chain is ADP-ribosylation factor-like protein 3, found in Chlamydomonas reinhardtii (Chlamydomonas smithii).